The chain runs to 78 residues: ATP synthase subunit c (78 aa).

2 consecutive transmembrane segments (helical) span residues 16–36 (LATL…ASFL) and 57–77 (MALA…ILFV).

It belongs to the ATPase C chain family. In terms of assembly, F-type ATPases have 2 components, F(1) - the catalytic core - and F(0) - the membrane proton channel. F(1) has five subunits: alpha(3), beta(3), gamma(1), delta(1), epsilon(1). F(0) has three main subunits: a(1), b(2) and c(10-14). The alpha and beta chains form an alternating ring which encloses part of the gamma chain. F(1) is attached to F(0) by a central stalk formed by the gamma and epsilon chains, while a peripheral stalk is formed by the delta and b chains.

Its subcellular location is the cell inner membrane. Functionally, f(1)F(0) ATP synthase produces ATP from ADP in the presence of a proton or sodium gradient. F-type ATPases consist of two structural domains, F(1) containing the extramembraneous catalytic core and F(0) containing the membrane proton channel, linked together by a central stalk and a peripheral stalk. During catalysis, ATP synthesis in the catalytic domain of F(1) is coupled via a rotary mechanism of the central stalk subunits to proton translocation. Key component of the F(0) channel; it plays a direct role in translocation across the membrane. A homomeric c-ring of between 10-14 subunits forms the central stalk rotor element with the F(1) delta and epsilon subunits. The polypeptide is ATP synthase subunit c (Hyphomonas neptunium (strain ATCC 15444)).